A 35-amino-acid polypeptide reads, in one-letter code: Jingzhaotoxin F6-27.63 (35 aa).

Intrachain disulfides connect Cys-2–Cys-17, Cys-9–Cys-22, and Cys-16–Cys-29.

This sequence belongs to the neurotoxin 10 (Hwtx-1) family. 49 (Jztx-F6) subfamily. In terms of tissue distribution, expressed by the venom gland.

It is found in the secreted. Its function is as follows. Probable ion channel inhibitor. The protein is Jingzhaotoxin F6-27.63 of Chilobrachys guangxiensis (Chinese earth tiger tarantula).